A 189-amino-acid chain; its full sequence is uncharacterized protein (189 aa).

The protein to M.jannaschii MJ1461.

This is an uncharacterized protein from Methanocaldococcus jannaschii (strain ATCC 43067 / DSM 2661 / JAL-1 / JCM 10045 / NBRC 100440) (Methanococcus jannaschii).